The primary structure comprises 216 residues: Probable GTP-binding protein EngB (216 aa).

The region spanning aspartate 43–aspartate 216 is the EngB-type G domain. GTP contacts are provided by residues glycine 51–serine 58, glycine 78–glutamate 82, aspartate 96–glycine 99, threonine 163–aspartate 166, and threonine 197–serine 199. Serine 58 and threonine 80 together coordinate Mg(2+).

It belongs to the TRAFAC class TrmE-Era-EngA-EngB-Septin-like GTPase superfamily. EngB GTPase family. Mg(2+) is required as a cofactor.

Necessary for normal cell division and for the maintenance of normal septation. This chain is Probable GTP-binding protein EngB, found in Ruegeria sp. (strain TM1040) (Silicibacter sp.).